The following is a 244-amino-acid chain: MKLAQARRPATSKPRLISTWLLRPLLLLLTAALLYQSWFLLHIVYWRSYSPTTSAFMQDRLKIMRQQNPAASLQHQWVDYEQISSHLKRAVIAAEDARFLQHQGFDYKAIETAWKKNLKQRKWAAGGSTISQQLAKNLFLSTEKTVWRKSRETLITLMLEEFLTKRRILEIYLNIIEWGDGIFGIEAAARHYFGISAASLTPAQAAWLASIIPNPRFYDTRRTLPKLLNKSRIILSRLPAAKIP.

A helical transmembrane segment spans residues 25–45; sequence LLLLLTAALLYQSWFLLHIVY.

It belongs to the glycosyltransferase 51 family.

Its subcellular location is the cell inner membrane. It catalyses the reaction [GlcNAc-(1-&gt;4)-Mur2Ac(oyl-L-Ala-gamma-D-Glu-L-Lys-D-Ala-D-Ala)](n)-di-trans,octa-cis-undecaprenyl diphosphate + beta-D-GlcNAc-(1-&gt;4)-Mur2Ac(oyl-L-Ala-gamma-D-Glu-L-Lys-D-Ala-D-Ala)-di-trans,octa-cis-undecaprenyl diphosphate = [GlcNAc-(1-&gt;4)-Mur2Ac(oyl-L-Ala-gamma-D-Glu-L-Lys-D-Ala-D-Ala)](n+1)-di-trans,octa-cis-undecaprenyl diphosphate + di-trans,octa-cis-undecaprenyl diphosphate + H(+). It participates in cell wall biogenesis; peptidoglycan biosynthesis. Functionally, peptidoglycan polymerase that catalyzes glycan chain elongation from lipid-linked precursors. The chain is Biosynthetic peptidoglycan transglycosylase from Nitrosomonas europaea (strain ATCC 19718 / CIP 103999 / KCTC 2705 / NBRC 14298).